A 264-amino-acid polypeptide reads, in one-letter code: S-adenosylmethionine decarboxylase proenzyme (264 aa).

Ser-111 functions as the Schiff-base intermediate with substrate; via pyruvic acid in the catalytic mechanism. At Ser-111 the chain carries Pyruvic acid (Ser); by autocatalysis. His-116 serves as the catalytic Proton acceptor; for processing activity. The active-site Proton donor; for catalytic activity is the Cys-139.

This sequence belongs to the prokaryotic AdoMetDC family. Type 2 subfamily. As to quaternary structure, heterooctamer of four alpha and four beta chains arranged as a tetramer of alpha/beta heterodimers. Pyruvate serves as cofactor. Post-translationally, is synthesized initially as an inactive proenzyme. Formation of the active enzyme involves a self-maturation process in which the active site pyruvoyl group is generated from an internal serine residue via an autocatalytic post-translational modification. Two non-identical subunits are generated from the proenzyme in this reaction, and the pyruvate is formed at the N-terminus of the alpha chain, which is derived from the carboxyl end of the proenzyme. The post-translation cleavage follows an unusual pathway, termed non-hydrolytic serinolysis, in which the side chain hydroxyl group of the serine supplies its oxygen atom to form the C-terminus of the beta chain, while the remainder of the serine residue undergoes an oxidative deamination to produce ammonia and the pyruvoyl group blocking the N-terminus of the alpha chain.

The enzyme catalyses S-adenosyl-L-methionine + H(+) = S-adenosyl 3-(methylsulfanyl)propylamine + CO2. It functions in the pathway amine and polyamine biosynthesis; S-adenosylmethioninamine biosynthesis; S-adenosylmethioninamine from S-adenosyl-L-methionine: step 1/1. In terms of biological role, catalyzes the decarboxylation of S-adenosylmethionine to S-adenosylmethioninamine (dcAdoMet), the propylamine donor required for the synthesis of the polyamines spermine and spermidine from the diamine putrescine. In Geobacillus kaustophilus (strain HTA426), this protein is S-adenosylmethionine decarboxylase proenzyme.